The chain runs to 1404 residues: DNA-directed RNA polymerase subunit beta' (1404 aa).

Zn(2+) is bound by residues Cys70, Cys72, Cys85, and Cys88. Mg(2+)-binding residues include Asp460, Asp462, and Asp464. 4 residues coordinate Zn(2+): Cys814, Cys888, Cys895, and Cys898.

The protein belongs to the RNA polymerase beta' chain family. In terms of assembly, the RNAP catalytic core consists of 2 alpha, 1 beta, 1 beta' and 1 omega subunit. When a sigma factor is associated with the core the holoenzyme is formed, which can initiate transcription. The cofactor is Mg(2+). Zn(2+) is required as a cofactor.

The enzyme catalyses RNA(n) + a ribonucleoside 5'-triphosphate = RNA(n+1) + diphosphate. Functionally, DNA-dependent RNA polymerase catalyzes the transcription of DNA into RNA using the four ribonucleoside triphosphates as substrates. This chain is DNA-directed RNA polymerase subunit beta', found in Buchnera aphidicola subsp. Baizongia pistaciae (strain Bp).